The primary structure comprises 351 residues: V-type proton ATPase subunit d1 (351 aa).

It belongs to the V-ATPase V0D/AC39 subunit family. As to quaternary structure, V-ATPase is a heteromultimeric enzyme composed of a peripheral catalytic V1 complex (components A to H) attached to an integral membrane V0 proton pore complex (components: a, c, c'', d and e).

Its subcellular location is the vacuole membrane. Its function is as follows. Subunit of the integral membrane V0 complex of vacuolar ATPase. Vacuolar ATPase is responsible for acidifying a variety of intracellular compartments in eukaryotic cells, thus providing most of the energy required for transport processes in the vacuolar system. The chain is V-type proton ATPase subunit d1 (VHA-d1) from Arabidopsis thaliana (Mouse-ear cress).